We begin with the raw amino-acid sequence, 372 residues long: Glutamate 5-kinase (372 aa).

Residue Lys-14 participates in ATP binding. Residues Ser-54, Asp-141, and Asn-153 each coordinate substrate. 173–174 (TD) lines the ATP pocket. The region spanning 280–358 (RGTLVLDDGA…EAIVRELGYM (79 aa)) is the PUA domain.

This sequence belongs to the glutamate 5-kinase family.

The protein localises to the cytoplasm. The catalysed reaction is L-glutamate + ATP = L-glutamyl 5-phosphate + ADP. It participates in amino-acid biosynthesis; L-proline biosynthesis; L-glutamate 5-semialdehyde from L-glutamate: step 1/2. Catalyzes the transfer of a phosphate group to glutamate to form L-glutamate 5-phosphate. The sequence is that of Glutamate 5-kinase from Pseudomonas syringae pv. tomato (strain ATCC BAA-871 / DC3000).